The primary structure comprises 300 residues: Taste receptor type 2 member 105 (300 aa).

Residues 1-7 are Extracellular-facing; sequence MLSAAEG. Residues 8–28 form a helical membrane-spanning segment; it reads ILLSIATVEAGLGVLGNTFIA. Topologically, residues 29–43 are cytoplasmic; that stretch reads LVNCMDWAKNNKLSM. The helical transmembrane segment at 44–64 threads the bilayer; sequence TGFLLIGLATSRIFIVWLLTL. The Extracellular segment spans residues 65–87; the sequence is DAYAKLFYPSKYFSSSLIEIISY. Residues 88 to 108 form a helical membrane-spanning segment; that stretch reads IWMTVNHLTVWFATSLSIFYF. At 109-128 the chain is on the cytoplasmic side; sequence LKIANFSDCVFLWLKRRTDK. The chain crosses the membrane as a helical span at residues 129 to 149; that stretch reads AFVFLLGCLLTSWVISFSFVV. The Extracellular segment spans residues 150–181; that stretch reads KVMKDGKVNHRNRTSEMYWEKRQFTINYVFLN. Asn-161 carries N-linked (GlcNAc...) asparagine glycosylation. A helical transmembrane segment spans residues 182 to 202; it reads IGVISLFMMTLTACFLLIMSL. At 203 to 233 the chain is on the cytoplasmic side; sequence WRHSRQMQSGVSGFRDLNTEAHVKAIKFLIS. Residues 234 to 254 form a helical membrane-spanning segment; it reads FIILFVLYFIGVSIEIICIFI. Topologically, residues 255-259 are extracellular; sequence PENKL. Residues 260-280 form a helical membrane-spanning segment; that stretch reads LFIFGFTTASIYPCCHSFILI. The Cytoplasmic portion of the chain corresponds to 281–300; sequence LSNSQLKQAFVKVLQGLKFF.

It belongs to the G-protein coupled receptor T2R family. Expressed in subsets of taste receptor cells of the tongue and palate epithelium and exclusively in gustducin-positive cells. Expressed in gastric and duodenal tissues.

It localises to the membrane. Its function is as follows. Gustducin-coupled cycloheximide receptor implicated in the perception of bitter compounds in the oral cavity and the gastrointestinal tract. Signals through PLCB2 and the calcium-regulated cation channel TRPM5. The chain is Taste receptor type 2 member 105 (Tas2r105) from Mus musculus (Mouse).